A 1774-amino-acid polypeptide reads, in one-letter code: MSSLRDQLAQVAQNNATVALDRKRRQKLHSASLVYNPKTAATQDYEYIYDTALESFHTLVSLDLRFKVFTNSLFSASSVTIDRNVQTKDQIRDLDNAVNAYLMLISPKWHLTPALHATEWLIRRFQIHIHNAEMLLLSTLNQYQTPVFKRILNIVKLPPLFNPFTNFVRNDKNPTDLTLIKLFNDMDFLKLYSNYLSKIIKQKVTYTNQLLFTTCCFINVIAFNANDEDKLNKLVPLILEISAKLLASDSSDCQMAAHTMLAVLATALPLNKSIIIAATETILANLKEDDARKKALVTISKLFQTLKGVGNVDQLPVKIYKLVDNSFPFEYLLQFLSNENKYSSDKFFTAYIRSVIRYDHDKLSQIVKILRKIKLEKYEVRFIITDLIHLSEVLEDKSQLIDVFEYFISINEGLVLKCLQALNLTGEVFEIRLTTSLFSVKNSAEQSGEDIIKVLDDAKASTANGSAVPFKDFMTKNSEFISTKAESMLLVKDEKFVKLLSLFVEAVSKGYQPGLFLSSFFTTLESRITFVLRIIVSPGSPVALRLISLTQLSKFINGIDEQTDLFSLVPILVTALMDISRSVRSNTKKVLQQIAKRPFTAKYFLSNVLYGENLKVPMLSPKDSKFWLTNFLSDYIVESTDISSLVIPSKNDMVYMLFWCNQALHLPLAYSKTIMLKLLTAVPQYAFTYSKVFEQFMATYITERSSWETKCIKNKTNFKDFETAVCAIVAPKEKNSFAIDFLINCLESEYEQLSNIMADRILSLYPTLKFPNQLKIVQSIIDSSVDKELSYDGLETLQSLPLTADIFVSVLKSNTINSEDQTDLTKRRRRRSSTVNKSALQKQDISQIAEAHLKKMTIILETLDKLKVKSNENLLNALFNLLSDLETLDHDGGLPVLYAQETLSSCLLNTISSLKSNNGSMKLPSIRADILVAAIRSSTSPQMQNKLLLVVGALASVSPETILHSVMPIFTFMGAHTIRQDDEFSTLVVERTISTIVPALLKSTEVTNKSDEIEFLLMSFSTAFSHVPKHRRVSLYSTLVRELGPSDVIAPFLFLIAQQYSNCLEKFKIAESKNYIEFFKAFLSKFDILEQLHGFNELFNLVELLDEDSSKNEVAPTRTLFSNGIVNMSKSELFVLKKNDLDFIDKVIGESKSDYYNTSSNLKLRILSTLLDPNIEIEVKNQVRNEFSILLSKTLNAINMTDSLSYDKHSSAGSNDEEAGSESEAEVDQKELKDILFGLLEHVLDLLPIQDFVASILPLLQGNTDESVRHHLTVVTSNKFIEEPMESFETANEILSTLVETTEKASESTQILQVTLNTISSIVTRFGDRLDSHLLVKSMENSCKQLTSKKIELEISSLTVLTTLIQTLGVKTLAFYPKIVPVAISIFKTYQNAKNNLKEQLQLAIVLLFASMIKKIPSFLLSNLQDVFVILFHSDEVADSVRLSVISLIVEHIPLKDVFKTLQKVWTNDVSSSNNSVAVSLFLSMLESAVEAIDKKSATQQSPVFFRLLLNLFEYRSICTFDENSINRIEASVHQIANVYVLKLNDKVFRPLFALVVNWAFNGEGVTNTNMSKEERLMAFYKFYNKTQENLKSIITSYFTYLLEPTNNLLKQFISKETVNVSLRRLVLISLTSSFKYDRDEYWKSTSRFELISESLINQLTNVEDVIGKYLVKAIGSLATNNSGVDEHNKIMSDLMISHMKTSCKTREKFWAVRSMKLIYSKVGDGWLVLLPRLVPIIAELLEDEDEEVEYEVRSGLVKVVESVMGEPFDRYLS.

The tract at residues 1206-1226 (YDKHSSAGSNDEEAGSESEAE) is disordered. A compositionally biased stretch (acidic residues) spans 1215-1226 (NDEEAGSESEAE). The stretch at 1734–1772 (LVPIIAELLEDEDEEVEYEVRSGLVKVVESVMGEPFDRY) is one HEAT repeat.

Belongs to the HEATR1/UTP10 family. Component of the ribosomal small subunit (SSU) processome.

The protein resides in the nucleus. It is found in the nucleolus. Its function is as follows. Involved in nucleolar processing of pre-18S ribosomal RNA. Involved in ribosome biosynthesis. The chain is U3 small nucleolar RNA-associated protein 10 from Kluyveromyces lactis (strain ATCC 8585 / CBS 2359 / DSM 70799 / NBRC 1267 / NRRL Y-1140 / WM37) (Yeast).